Consider the following 246-residue polypeptide: High mobility group protein 1 (246 aa).

Positions proline 106–leucine 179 form a DNA-binding region, HMG box. Residues leucine 179–isoleucine 246 are disordered. Residues proline 214–glutamate 227 show a composition bias toward basic and acidic residues. Residues lysine 228 to lysine 238 are compositionally biased toward basic residues.

As to quaternary structure, interacts with FPR1. Interacts with an unidentified DNA helicase. Associates with rDNA.

It localises to the nucleus. The protein resides in the nucleolus. DNA-binding protein that is probably part of the rDNA transcription apparatus. Acts synergetically with the RPA49 subunit of RNA polymerase I during rDNA transcription. May participate in mutagenesis control. This is High mobility group protein 1 (HMO1) from Saccharomyces cerevisiae (strain ATCC 204508 / S288c) (Baker's yeast).